Reading from the N-terminus, the 305-residue chain is Putative S-adenosyl-L-methionine-dependent methyltransferase Mvan_1344 (305 aa).

S-adenosyl-L-methionine-binding positions include D130 and 159–160; that span reads DL.

This sequence belongs to the UPF0677 family.

Functionally, exhibits S-adenosyl-L-methionine-dependent methyltransferase activity. The chain is Putative S-adenosyl-L-methionine-dependent methyltransferase Mvan_1344 from Mycolicibacterium vanbaalenii (strain DSM 7251 / JCM 13017 / BCRC 16820 / KCTC 9966 / NRRL B-24157 / PYR-1) (Mycobacterium vanbaalenii).